The following is a 498-amino-acid chain: Glycerol kinase (498 aa).

Residue T12 participates in ADP binding. T12, T13, and S14 together coordinate ATP. Sn-glycerol 3-phosphate is bound at residue T12. Position 16 (R16) interacts with ADP. R82, E83, and Y134 together coordinate sn-glycerol 3-phosphate. Residues R82, E83, and Y134 each coordinate glycerol. H230 bears the Phosphohistidine; by HPr mark. D244 provides a ligand contact to sn-glycerol 3-phosphate. Glycerol-binding residues include D244 and Q245. ADP contacts are provided by T266 and G309. Residues T266, G309, Q313, and G410 each coordinate ATP. ADP contacts are provided by G410 and N414.

The protein belongs to the FGGY kinase family. Homotetramer and homodimer (in equilibrium). Post-translationally, the phosphoenolpyruvate-dependent sugar phosphotransferase system (PTS), including enzyme I, and histidine-containing protein (HPr) are required for the phosphorylation, which leads to the activation of the enzyme.

The catalysed reaction is glycerol + ATP = sn-glycerol 3-phosphate + ADP + H(+). It participates in polyol metabolism; glycerol degradation via glycerol kinase pathway; sn-glycerol 3-phosphate from glycerol: step 1/1. With respect to regulation, activated by phosphorylation and inhibited by fructose 1,6-bisphosphate (FBP). In terms of biological role, key enzyme in the regulation of glycerol uptake and metabolism. Catalyzes the phosphorylation of glycerol to yield sn-glycerol 3-phosphate. This is Glycerol kinase from Staphylococcus aureus (strain MRSA252).